The sequence spans 344 residues: HTH-type transcriptional regulator MalR (344 aa).

The HTH lacI-type domain occupies 1 to 54; it reads MTTRLADIAAQAGVSEATVSRVLNGKPGVAATTRQSVLAALDVLGYERPVRLRQ. Residues 5–24 constitute a DNA-binding region (H-T-H motif); the sequence is LADIAAQAGVSEATVSRVLN.

Its function is as follows. Transcriptional repressor of the maltosaccharide utilization operon malEFG. The sequence is that of HTH-type transcriptional regulator MalR (malR) from Streptomyces coelicolor (strain ATCC BAA-471 / A3(2) / M145).